The following is a 305-amino-acid chain: MADFKPRIEISFLETFICSAFAACFAELCTIPLDTAKVRLQLQRKIPTGDGENLPKYRGSIGTLATIAREEGISGLWKGVIAGLHRQCIYGGLRIGLYEPVKTLLVGSDFIGDIPLYQKILAALLTGAIAIIVANPTDLVKVRLQSEGKLPAGVPRRYAGAVDAYFTIVKLEGVSALWTGLGPNIARNAIVNAAELASYDQIKETIMKIPFFRDSVLTHLLAGLAAGFFAVCIGSPIDVVKSRMMGDSTYRNTVDCFIKTMKTEGIMAFYKGFLPNFTRLGTWNAIMFLTLEQVKKVFLREVLYD.

Solcar repeat units follow at residues 10–104 (ISFL…VKTL), 114–205 (IPLY…IKET), and 214–297 (DSVL…VKKV). A run of 6 helical transmembrane segments spans residues 16–36 (FICSAFAACFAELCTIPLDTA), 73–93 (ISGLWKGVIAGLHRQCIYGGL), 120–140 (ILAALLTGAIAIIVANPTDLV), 179–199 (TGLGPNIARNAIVNAAELASY), 220–240 (LLAGLAAGFFAVCIGSPIDVV), and 270–290 (YKGFLPNFTRLGTWNAIMFLT).

Belongs to the mitochondrial carrier (TC 2.A.29) family.

It is found in the mitochondrion inner membrane. PUMPS are mitochondrial transporter proteins that create proton leaks across the inner mitochondrial membrane, thus uncoupling oxidative phosphorylation. This leads to a decrease in the efficiency of oxidative phosphorylation and an increase in heat production. May be involved in protecting plant cells against oxidative stress damage. This Arabidopsis thaliana (Mouse-ear cress) protein is Mitochondrial uncoupling protein 2 (PUMP2).